Here is a 442-residue protein sequence, read N- to C-terminus: C4-dicarboxylate transport protein (442 aa).

Transmembrane regions (helical) follow at residues 10 to 30 (VQVLIAIALGILTGFLFPSLG), 40 to 60 (FIKLIKMIIAPIIFATVVSGI), 77 to 97 (LLYFELVTTFALVIGLVIVNI), 144 to 164 (FTQGDLLQVLLVAVLFGFALL), 183 to 203 (VIFVILGFVMRLAPIGAFGAM), 221 to 241 (LMITFYATCALFIFGVLGLIA), 331 to 351 (LLGVLLLTSKGAAGVTGSGFI), and 354 to 374 (AATLSAVGDVPVAGLALILGI). A disordered region spans residues 418–442 (LPTIEPDVHSEERGEGRELDSLRPA). Residues 423–442 (PDVHSEERGEGRELDSLRPA) are compositionally biased toward basic and acidic residues.

It belongs to the dicarboxylate/amino acid:cation symporter (DAACS) (TC 2.A.23) family.

The protein localises to the cell membrane. Functionally, responsible for the transport of dicarboxylates such as succinate, fumarate, and malate across the membrane. The protein is C4-dicarboxylate transport protein of Deinococcus deserti (strain DSM 17065 / CIP 109153 / LMG 22923 / VCD115).